The chain runs to 362 residues: Holliday junction branch migration complex subunit RuvB (362 aa).

The segment at 1–20 is disordered; the sequence is MKRTIMTNTDTFEQPNTGAN. The segment at 15-203 is large ATPase domain (RuvB-L); sequence PNTGANEESL…FGFTAHLDFY (189 aa). Residues Leu42, Arg43, Gly84, Lys87, Thr88, Thr89, 150–152, Arg193, Tyr203, and Arg240 contribute to the ATP site; that span reads EDF. Mg(2+) is bound at residue Thr88. Residues 204–274 form a small ATPAse domain (RuvB-S) region; sequence PHEELEKLIE…DVKEALALYQ (71 aa). Residues 277–362 form a head domain (RuvB-H) region; it reads TEGLDRLDIA…ESAYDVNEMS (86 aa). Residues Arg332 and Arg337 each contribute to the DNA site.

This sequence belongs to the RuvB family. As to quaternary structure, homohexamer. Forms an RuvA(8)-RuvB(12)-Holliday junction (HJ) complex. HJ DNA is sandwiched between 2 RuvA tetramers; dsDNA enters through RuvA and exits via RuvB. An RuvB hexamer assembles on each DNA strand where it exits the tetramer. Each RuvB hexamer is contacted by two RuvA subunits (via domain III) on 2 adjacent RuvB subunits; this complex drives branch migration. In the full resolvosome a probable DNA-RuvA(4)-RuvB(12)-RuvC(2) complex forms which resolves the HJ.

It is found in the cytoplasm. The catalysed reaction is ATP + H2O = ADP + phosphate + H(+). Functionally, the RuvA-RuvB-RuvC complex processes Holliday junction (HJ) DNA during genetic recombination and DNA repair, while the RuvA-RuvB complex plays an important role in the rescue of blocked DNA replication forks via replication fork reversal (RFR). RuvA specifically binds to HJ cruciform DNA, conferring on it an open structure. The RuvB hexamer acts as an ATP-dependent pump, pulling dsDNA into and through the RuvAB complex. RuvB forms 2 homohexamers on either side of HJ DNA bound by 1 or 2 RuvA tetramers; 4 subunits per hexamer contact DNA at a time. Coordinated motions by a converter formed by DNA-disengaged RuvB subunits stimulates ATP hydrolysis and nucleotide exchange. Immobilization of the converter enables RuvB to convert the ATP-contained energy into a lever motion, pulling 2 nucleotides of DNA out of the RuvA tetramer per ATP hydrolyzed, thus driving DNA branch migration. The RuvB motors rotate together with the DNA substrate, which together with the progressing nucleotide cycle form the mechanistic basis for DNA recombination by continuous HJ branch migration. Branch migration allows RuvC to scan DNA until it finds its consensus sequence, where it cleaves and resolves cruciform DNA. This chain is Holliday junction branch migration complex subunit RuvB, found in Bifidobacterium adolescentis (strain ATCC 15703 / DSM 20083 / NCTC 11814 / E194a).